A 253-amino-acid chain; its full sequence is 23S rRNA (cytidine-2'-O)-methyltransferase TlyA (253 aa).

Residues 1–73 (MRFDFFVSKR…LKLDLLSEIY (73 aa)) enclose the S4 RNA-binding domain.

This sequence belongs to the TlyA family.

It catalyses the reaction cytidine(1920) in 23S rRNA + S-adenosyl-L-methionine = 2'-O-methylcytidine(1920) in 23S rRNA + S-adenosyl-L-homocysteine + H(+). In terms of biological role, catalyzes the 2'-O-methylation at nucleotide C1920 in 23S rRNA. Enhances motility. Enhances biofilm formation. Involved in the assembly of 70S ribosomes. Involved in virulence by promoting adherence and invasion to host cells. Involved in pathogenicity by modulating secretion of host-protective chemokine interleukin 8 (IL-8). Involved in susceptibility to antibiotic capreomycin. This Campylobacter jejuni subsp. jejuni serotype O:23/36 (strain 81-176) protein is 23S rRNA (cytidine-2'-O)-methyltransferase TlyA.